Reading from the N-terminus, the 310-residue chain is UDP-N-acetylenolpyruvoylglucosamine reductase (310 aa).

In terms of domain architecture, FAD-binding PCMH-type spans 35 to 203; it reads RAGGAAEALV…TRVRFALRKG (169 aa). Residue arginine 183 is part of the active site. Serine 232 acts as the Proton donor in catalysis. The active site involves glutamate 302.

The protein belongs to the MurB family. Requires FAD as cofactor.

It is found in the cytoplasm. It catalyses the reaction UDP-N-acetyl-alpha-D-muramate + NADP(+) = UDP-N-acetyl-3-O-(1-carboxyvinyl)-alpha-D-glucosamine + NADPH + H(+). It functions in the pathway cell wall biogenesis; peptidoglycan biosynthesis. Functionally, cell wall formation. The protein is UDP-N-acetylenolpyruvoylglucosamine reductase of Myxococcus xanthus (strain DK1622).